A 906-amino-acid chain; its full sequence is Protein translocase subunit SecA (906 aa).

ATP is bound by residues Gln-86, 104 to 108 (GEGKT), and Asp-511. 2 stretches are compositionally biased toward basic and acidic residues: residues 853–865 (HESV…RHDE) and 877–888 (VRREGPKVKRND). The disordered stretch occupies residues 853–906 (HESVIDNNQRHDEDEQEEAPKVQQVRREGPKVKRNDPCPCGSGKKYKQCHSKVE). Zn(2+) is bound by residues Cys-890, Cys-892, Cys-901, and His-902. Basic residues predominate over residues 896–906 (KKYKQCHSKVE).

This sequence belongs to the SecA family. Monomer and homodimer. Part of the essential Sec protein translocation apparatus which comprises SecA, SecYEG and auxiliary proteins SecDF-YajC and YidC. The cofactor is Zn(2+).

Its subcellular location is the cell inner membrane. It is found in the cytoplasm. The enzyme catalyses ATP + H2O + cellular proteinSide 1 = ADP + phosphate + cellular proteinSide 2.. In terms of biological role, part of the Sec protein translocase complex. Interacts with the SecYEG preprotein conducting channel. Has a central role in coupling the hydrolysis of ATP to the transfer of proteins into and across the cell membrane, serving both as a receptor for the preprotein-SecB complex and as an ATP-driven molecular motor driving the stepwise translocation of polypeptide chains across the membrane. The polypeptide is Protein translocase subunit SecA (Francisella tularensis subsp. mediasiatica (strain FSC147)).